A 189-amino-acid chain; its full sequence is Thermostable direct hemolysin-related (189 aa).

The N-terminal stretch at 1 to 24 (MKYRYFAKKSFLFISMLAAFKTFA) is a signal peptide. An intrachain disulfide couples Cys-175 to Cys-185.

The protein belongs to the TDH hemolysin family. In terms of assembly, homodimer.

Bacterial hemolysins are exotoxins that attack blood cell membranes and cause cell rupture by mechanisms not clearly defined. This Vibrio parahaemolyticus protein is Thermostable direct hemolysin-related (tdh3).